The primary structure comprises 232 residues: 2,3-bisphosphoglycerate-dependent phosphoglycerate mutase 1 (232 aa).

Substrate-binding positions include 8 to 15 (RHGQSLWN), 21 to 22 (TG), Arg58, 114 to 117 (ERYY), Lys125, 141 to 142 (RR), and 185 to 186 (GN). Catalysis depends on His9, which acts as the Tele-phosphohistidine intermediate. Glu114 acts as the Proton donor/acceptor in catalysis.

The protein belongs to the phosphoglycerate mutase family. BPG-dependent PGAM subfamily.

The enzyme catalyses (2R)-2-phosphoglycerate = (2R)-3-phosphoglycerate. It functions in the pathway carbohydrate degradation; glycolysis; pyruvate from D-glyceraldehyde 3-phosphate: step 3/5. In terms of biological role, catalyzes the interconversion of 2-phosphoglycerate and 3-phosphoglycerate. The protein is 2,3-bisphosphoglycerate-dependent phosphoglycerate mutase 1 of Gloeobacter violaceus (strain ATCC 29082 / PCC 7421).